A 954-amino-acid chain; its full sequence is Kinesin-like protein KIN-7A (954 aa).

The tract at residues Met1–Arg29 is disordered. Residues Thr17–Thr28 are compositionally biased toward low complexity. The Kinesin motor domain occupies Lys34–Val354. Residue Gly119 to Thr126 coordinates ATP. 2 coiled-coil regions span residues Val363 to Gln436 and Leu480 to Ser588. Disordered regions lie at residues Pro624–Asn689 and Gly741–Asp762. The segment covering Pro630–Pro639 has biased composition (low complexity). 2 stretches are compositionally biased toward basic and acidic residues: residues Leu640 to Glu660 and Lys666 to Arg681.

This sequence belongs to the TRAFAC class myosin-kinesin ATPase superfamily. Kinesin family. KIN-7 subfamily. As to expression, ubiquitous with a preferential expression in the shoot apical meristem (SAM).

May be essential to promote the progression of cytokinesis during node-internode differentiation. This is Kinesin-like protein KIN-7A from Oryza sativa subsp. japonica (Rice).